Consider the following 237-residue polypeptide: UPF0280 protein Mpal_1292 (237 aa).

The protein belongs to the UPF0280 family.

This Methanosphaerula palustris (strain ATCC BAA-1556 / DSM 19958 / E1-9c) protein is UPF0280 protein Mpal_1292.